Reading from the N-terminus, the 831-residue chain is DNA polymerase I, thermostable (831 aa).

Residues 174–258 (RPEQWVDYRA…TDLPLEVDFG (85 aa)) form the 5'-3' exonuclease domain. The polymerase stretch occupies residues 409–831 (ERLFQTLKER…LGEDWLSAKE (423 aa)).

The protein belongs to the DNA polymerase type-A family.

It carries out the reaction DNA(n) + a 2'-deoxyribonucleoside 5'-triphosphate = DNA(n+1) + diphosphate. In terms of biological role, in addition to polymerase activity, this DNA polymerase exhibits 5'-3' exonuclease activity. The chain is DNA polymerase I, thermostable (polA) from Thermus thermophilus.